A 307-amino-acid polypeptide reads, in one-letter code: Trehalose transport system permease protein SugA (307 aa).

A run of 6 helical transmembrane segments spans residues 25–45, 89–109, 123–143, 168–188, 217–237, and 272–292; these read LAFM…AYPI, LAIT…LALV, AVLI…YYAW, LGIV…LLLL, ILPM…LDAF, and LGSA…FIFI. One can recognise an ABC transmembrane type-1 domain in the interval 85 to 291; that stretch reads LAVTLAITAV…GCVAVIAFIF (207 aa).

The protein belongs to the binding-protein-dependent transport system permease family. The complex is composed of two ATP-binding proteins (SugC), two transmembrane proteins (Suga and SugB) and a solute-binding protein (LpqY).

It is found in the cell inner membrane. Part of the ABC transporter complex LpqY-SugA-SugB-SugC, which is highly specific for uptake of trehalose. Involved in the recycling of extracellular trehalose released from trehalose-containing molecules synthesized by M.tuberculosis. Trehalose uptake is essential for virulence. Probably responsible for the translocation of the substrate across the membrane. This is Trehalose transport system permease protein SugA (sugA) from Mycobacterium tuberculosis (strain CDC 1551 / Oshkosh).